The sequence spans 376 residues: Probable ATP-dependent RNA helicase YfmL (376 aa).

The region spanning 35-205 (AQLIMDGKDV…RELAQEPEVL (171 aa)) is the Helicase ATP-binding domain. ATP is bound at residue 48 to 55 (SPTGTGKT). Positions 153–156 (DETD) match the DEAD box motif. The 144-residue stretch at 231 to 374 (KLLQKLSRLE…EAVYAGGKLK (144 aa)) folds into the Helicase C-terminal domain.

The protein belongs to the DEAD box helicase family.

It carries out the reaction ATP + H2O = ADP + phosphate + H(+). In terms of biological role, a probable DEAD-box RNA helicase that plays a role in ribosomal 50S subunit assembly. May be a non-specific RNA helicase. The polypeptide is Probable ATP-dependent RNA helicase YfmL (yfmL) (Bacillus subtilis (strain 168)).